The sequence spans 98 residues: Large ribosomal subunit protein bL25 (98 aa).

The protein belongs to the bacterial ribosomal protein bL25 family. Part of the 50S ribosomal subunit; part of the 5S rRNA/L5/L18/L25 subcomplex. Contacts the 5S rRNA. Binds to the 5S rRNA independently of L5 and L18.

In terms of biological role, this is one of the proteins that binds to the 5S RNA in the ribosome where it forms part of the central protuberance. This Synechocystis sp. (strain ATCC 27184 / PCC 6803 / Kazusa) protein is Large ribosomal subunit protein bL25.